The primary structure comprises 471 residues: 3-isopropylmalate dehydratase large subunit (471 aa).

Positions 349, 410, and 413 each coordinate [4Fe-4S] cluster.

It belongs to the aconitase/IPM isomerase family. LeuC type 1 subfamily. As to quaternary structure, heterodimer of LeuC and LeuD. It depends on [4Fe-4S] cluster as a cofactor.

The catalysed reaction is (2R,3S)-3-isopropylmalate = (2S)-2-isopropylmalate. It participates in amino-acid biosynthesis; L-leucine biosynthesis; L-leucine from 3-methyl-2-oxobutanoate: step 2/4. Functionally, catalyzes the isomerization between 2-isopropylmalate and 3-isopropylmalate, via the formation of 2-isopropylmaleate. This is 3-isopropylmalate dehydratase large subunit from Chromobacterium violaceum (strain ATCC 12472 / DSM 30191 / JCM 1249 / CCUG 213 / NBRC 12614 / NCIMB 9131 / NCTC 9757 / MK).